We begin with the raw amino-acid sequence, 344 residues long: DNA-directed RNA polymerase subunit alpha (344 aa).

The segment at 1-246 (MPMERFLKDF…EFLFPLVDFE (246 aa)) is alpha N-terminal domain (alpha-NTD). The interval 259–344 (ESSNLLDMSI…VLSKNVKISE (86 aa)) is alpha C-terminal domain (alpha-CTD).

It belongs to the RNA polymerase alpha chain family. Homodimer. The RNAP catalytic core consists of 2 alpha, 1 beta, 1 beta' and 1 omega subunit. When a sigma factor is associated with the core the holoenzyme is formed, which can initiate transcription.

The catalysed reaction is RNA(n) + a ribonucleoside 5'-triphosphate = RNA(n+1) + diphosphate. Its function is as follows. DNA-dependent RNA polymerase catalyzes the transcription of DNA into RNA using the four ribonucleoside triphosphates as substrates. This Borreliella afzelii (strain PKo) (Borrelia afzelii) protein is DNA-directed RNA polymerase subunit alpha.